The following is a 274-amino-acid chain: Glutamate racemase (274 aa).

Substrate-binding positions include 10-11 and 42-43; these read DS and YG. The active-site Proton donor/acceptor is C73. Residue 74 to 75 coordinates substrate; it reads NT. C184 (proton donor/acceptor) is an active-site residue. 185–186 contributes to the substrate binding site; that stretch reads TH.

This sequence belongs to the aspartate/glutamate racemases family.

It carries out the reaction L-glutamate = D-glutamate. Its pathway is cell wall biogenesis; peptidoglycan biosynthesis. In terms of biological role, provides the (R)-glutamate required for cell wall biosynthesis. The chain is Glutamate racemase from Latilactobacillus sakei subsp. sakei (strain 23K) (Lactobacillus sakei subsp. sakei).